The primary structure comprises 451 residues: Serine--tRNA ligase, cytoplasmic (451 aa).

Residues Cys213 and Cys244 are joined by a disulfide bond. 238–240 (TAE) contacts L-serine. ATP-binding positions include 269 to 271 (RKE) and Val285. Glu292 is an L-serine binding site. 358-361 (ELVS) is an ATP binding site. Thr396 contacts L-serine.

This sequence belongs to the class-II aminoacyl-tRNA synthetase family. Type-1 seryl-tRNA synthetase subfamily. Homodimer. The tRNA molecule binds across the dimer.

It localises to the cytoplasm. The protein resides in the cytosol. The catalysed reaction is tRNA(Ser) + L-serine + ATP = L-seryl-tRNA(Ser) + AMP + diphosphate + H(+). Functionally, catalyzes the attachment of serine to tRNA(Ser) in a two-step reaction: serine is first activated by ATP to form Ser-AMP and then transferred to the acceptor end of tRNA(Ser). This chain is Serine--tRNA ligase, cytoplasmic, found in Arabidopsis thaliana (Mouse-ear cress).